Consider the following 69-residue polypeptide: Neuropeptide-like protein 30 (69 aa).

A signal peptide spans 1-22; that stretch reads MISTSSILILVVLLACFMAASA. Tyrosine amide occurs at positions 29, 39, 46, and 53. 2 positions are modified to tryptophan amide: tryptophan 58 and tryptophan 67.

It belongs to the YARP (YGGW-amide related peptide) family. In terms of tissue distribution, expressed in hypoderm.

The protein resides in the secreted. Functionally, may have antimicrobial activity. May play a role in response to fungal infection. The chain is Neuropeptide-like protein 30 (nlp-30) from Caenorhabditis elegans.